The sequence spans 348 residues: GMP reductase 2 (348 aa).

NADP(+)-binding positions include 26-27, K78, 129-131, and 180-181; these read SR, DVA, and IG. K(+) contacts are provided by G181, G183, and C186. C186 acts as the Thioimidate intermediate in catalysis. T188 serves as the catalytic Proton donor/acceptor. R189 serves as a coordination point for K(+). GMP contacts are provided by residues 219–221, 242–243, 268–270, and 286–290; these read DGG, GG, GMS, and RASEG. NADP(+)-binding positions include M269 and 285-286; that span reads YR. K291 bears the N6-acetyllysine mark. An NADP(+)-binding site is contributed by 314 to 317; sequence STCT.

This sequence belongs to the IMPDH/GMPR family. GuaC type 1 subfamily. Homotetramer.

The enzyme catalyses IMP + NH4(+) + NADP(+) = GMP + NADPH + 2 H(+). Its function is as follows. Catalyzes the irreversible NADPH-dependent deamination of GMP to IMP. It functions in the conversion of nucleobase, nucleoside and nucleotide derivatives of G to A nucleotides, and in maintaining the intracellular balance of A and G nucleotides. Plays a role in modulating cellular differentiation. The polypeptide is GMP reductase 2 (Bos taurus (Bovine)).